The following is a 631-amino-acid chain: Fusexin 1 (631 aa).

Positions 1–19 are cleaved as a signal peptide; the sequence is MRRAALILAFVLFIGLSSA. The domain I N-terminus stretch occupies residues 20–90; that stretch reads TVTSADSITY…THQDSKLKYS (71 aa). Residues 20 to 537 are Extracellular-facing; it reads TVTSADSITY…NLFGGSGSGD (518 aa). The segment at 91–170 is domain II N-terminus; that stretch reads TSTSDELRDI…KLATPAYIDN (80 aa). 4 residues coordinate Ca(2+): aspartate 112, serine 146, tyrosine 149, and aspartate 150. Cysteines 125 and 155 form a disulfide. Residues 143-148 form a fusion loop, required for fusogenic activity, not required for membrane surface localization region; sequence SVTSPV. The domain I central section stretch occupies residues 171–224; that stretch reads PDEIFTAKAELQAGDKTIQSATLSNGDAGDGTVTDLGDSKISWNGNLDLGASEP. The segment at 225–316 is domain II C-terminus; it reads ENSRVIALYS…KDSSLDTGSF (92 aa). Residues 317-348 form a domain I C-terminus region; that stretch reads VYDTPELLSYPSFTVYVDAGENGYIEVTKPTG. The interval 349–455 is domain III; sequence DPDIISTSST…SVSVTGIQQS (107 aa). Intrachain disulfides connect cysteine 389/cysteine 432, cysteine 457/cysteine 477, and cysteine 490/cysteine 506. The disordered stretch occupies residues 443-467; sequence DSTSVSVTGIQQSECNPGDQRREKN. Residues 456 to 509 are domain IV, required for fusogenic activity; that stretch reads ECNPGDQRREKNENDRWEIYTCQDNGLTYEYDVTCAEDEKAVAQGDNQFSCEKQ. A stem region spans residues 510 to 537; that stretch reads DDDSGGGDNTGSDSGLFSNLFGGSGSGD. A helical membrane pass occupies residues 538–558; sequence LLTQVHTALSILAGLVAGFFG. At 559–590 the chain is on the cytoplasmic side; the sequence is YRGARWIHGETDIKGGFKLESRNVSRVKRGSP. Residues 591–611 traverse the membrane as a helical segment; the sequence is VAGIVGAVLGFVVGYGVASVF. Histidine 612 is a topological domain (extracellular). A helical membrane pass occupies residues 613-630; sequence PVVQIIVVLGIAVGLYYF. Position 631 (arginine 631) is a topological domain, cytoplasmic.

It belongs to the HAP2/GCS1 family. Fusexin 1 subfamily. Monomer in solution, crystallizes as a trimer in high salt (2.5 M NaCl, 0.2 M CaCl(2)). The trimer is stabilized by interdomain contacts and numerous Ca(2+) and Na(+) ions.

It localises to the cell surface. The protein localises to the cell membrane. In terms of biological role, exhibits fusogenic activity. Mediates cell-cell fusion in mammalian cells when present in both cells (bilateral fusion). The chain is Fusexin 1 from Uncultured archaeon.